The primary structure comprises 300 residues: NAD kinase (300 aa).

Residue aspartate 75 is the Proton acceptor of the active site. Residues 75-76 (DG), 149-150 (ND), arginine 177, aspartate 179, 190-195 (TAYALS), alanine 214, and glutamine 248 contribute to the NAD(+) site.

The protein belongs to the NAD kinase family. It depends on a divalent metal cation as a cofactor.

It is found in the cytoplasm. It carries out the reaction NAD(+) + ATP = ADP + NADP(+) + H(+). Involved in the regulation of the intracellular balance of NAD and NADP, and is a key enzyme in the biosynthesis of NADP. Catalyzes specifically the phosphorylation on 2'-hydroxyl of the adenosine moiety of NAD to yield NADP. The polypeptide is NAD kinase (Burkholderia lata (strain ATCC 17760 / DSM 23089 / LMG 22485 / NCIMB 9086 / R18194 / 383)).